An 89-amino-acid polypeptide reads, in one-letter code: NADH-ubiquinone oxidoreductase chain 4L (89 aa).

Transmembrane regions (helical) follow at residues 1 to 21, 22 to 42, and 55 to 75; these read MNFS…NRKN, IILM…LILI, and FAIY…GILV.

Belongs to the complex I subunit 4L family.

It localises to the mitochondrion membrane. It carries out the reaction a ubiquinone + NADH + 5 H(+)(in) = a ubiquinol + NAD(+) + 4 H(+)(out). Its function is as follows. Core subunit of the mitochondrial membrane respiratory chain NADH dehydrogenase (Complex I) that is believed to belong to the minimal assembly required for catalysis. Complex I functions in the transfer of electrons from NADH to the respiratory chain. The immediate electron acceptor for the enzyme is believed to be ubiquinone. The protein is NADH-ubiquinone oxidoreductase chain 4L (nd4L) of Talaromyces marneffei (Penicillium marneffei).